We begin with the raw amino-acid sequence, 538 residues long: ESX-3 secretion system ATPase EccB3 (538 aa).

Positions 1–16 (MTNQQHDHDFDHDRRS) are enriched in basic and acidic residues. The disordered stretch occupies residues 1–25 (MTNQQHDHDFDHDRRSFASRTPVNN). The chain crosses the membrane as a helical span at residues 75–95 (VLMGVLIVITGLIGSFVFSLI).

This sequence belongs to the EccB family. As to quaternary structure, part of the ESX-3 / type VII secretion system (T7SS), which is composed of cytosolic and membrane components. The ESX-3 membrane complex is composed of EccB3, EccC3, EccD3 and EccE3.

It localises to the cell inner membrane. An ATPase. Part of the ESX-3 specialized secretion system, which is important for iron and zinc uptake or homeostasis. In Mycobacterium tuberculosis (strain CDC 1551 / Oshkosh), this protein is ESX-3 secretion system ATPase EccB3.